The sequence spans 158 residues: Ribosome maturation factor RimP (158 aa).

It belongs to the RimP family.

The protein localises to the cytoplasm. Required for maturation of 30S ribosomal subunits. This is Ribosome maturation factor RimP from Leuconostoc mesenteroides subsp. mesenteroides (strain ATCC 8293 / DSM 20343 / BCRC 11652 / CCM 1803 / JCM 6124 / NCDO 523 / NBRC 100496 / NCIMB 8023 / NCTC 12954 / NRRL B-1118 / 37Y).